A 245-amino-acid chain; its full sequence is tRNA pseudouridine synthase A 2 (245 aa).

The active-site Nucleophile is the Asp53. Residue Tyr111 participates in substrate binding.

The protein belongs to the tRNA pseudouridine synthase TruA family. As to quaternary structure, homodimer.

The catalysed reaction is uridine(38/39/40) in tRNA = pseudouridine(38/39/40) in tRNA. Its function is as follows. Formation of pseudouridine at positions 38, 39 and 40 in the anticodon stem and loop of transfer RNAs. The polypeptide is tRNA pseudouridine synthase A 2 (Bacillus cereus (strain ZK / E33L)).